We begin with the raw amino-acid sequence, 179 residues long: ATP synthase subunit b (179 aa).

Residues 23-43 traverse the membrane as a helical segment; that stretch reads IFWLIITFGILYVVLSKLILP.

It belongs to the ATPase B chain family. As to quaternary structure, F-type ATPases have 2 components, F(1) - the catalytic core - and F(0) - the membrane proton channel. F(1) has five subunits: alpha(3), beta(3), gamma(1), delta(1), epsilon(1). F(0) has three main subunits: a(1), b(2) and c(10-14). The alpha and beta chains form an alternating ring which encloses part of the gamma chain. F(1) is attached to F(0) by a central stalk formed by the gamma and epsilon chains, while a peripheral stalk is formed by the delta and b chains.

It is found in the cell inner membrane. Its function is as follows. F(1)F(0) ATP synthase produces ATP from ADP in the presence of a proton or sodium gradient. F-type ATPases consist of two structural domains, F(1) containing the extramembraneous catalytic core and F(0) containing the membrane proton channel, linked together by a central stalk and a peripheral stalk. During catalysis, ATP synthesis in the catalytic domain of F(1) is coupled via a rotary mechanism of the central stalk subunits to proton translocation. In terms of biological role, component of the F(0) channel, it forms part of the peripheral stalk, linking F(1) to F(0). This chain is ATP synthase subunit b, found in Pelagibacter ubique (strain HTCC1062).